The chain runs to 375 residues: MCGDQEGVSVAHKASEEIGARPVRGRQGRILRRAGLAVSLGITAMLVSGCSIDNVWLRFGWPSGVTPQATRMRELWTWSIIAALAMGVLVWGLTFWTVVFHRKKKDSPEFPRQTGYNVPLELTYTAIPFVIIAVLFYFTVVVQNYVHEKVADPDVTVDVTAFQWNWKFGYREVDFKDGGYQFNGIDTAREEAAQAQLKEYEERVDTEHGHPQPGPVHGKPENDILSYLHYDTVETVGTSTEIPVLVLPTGKVIEFQLAAADVIHAFWVPEFLFKRDVMPNPKENHSDNVFQITEIEKEGAFVGRCAEMCGTYHSMMNFEVRAVSPEKFTRYLDERRAGKTNAEALAAIGESPVATSTRPFNTDRTVKSAAAPEAE.

3 helical membrane passes run 36–56 (LAVS…DNVW), 80–100 (IIAA…TVVF), and 122–142 (LTYT…TVVV). Cu cation contacts are provided by His-264, Cys-305, Cys-309, and His-313. Residues 353 to 363 (VATSTRPFNTD) show a composition bias toward polar residues. Residues 353–375 (VATSTRPFNTDRTVKSAAAPEAE) are disordered.

This sequence belongs to the cytochrome c oxidase subunit 2 family. Cu cation is required as a cofactor. Requires heme as cofactor.

The protein localises to the cell membrane. It catalyses the reaction 4 Fe(II)-[cytochrome c] + O2 + 8 H(+)(in) = 4 Fe(III)-[cytochrome c] + 2 H2O + 4 H(+)(out). In terms of biological role, subunits I and II form the functional core of the enzyme complex. Electrons originating in cytochrome c are transferred via heme a and Cu(A) to the binuclear center formed by heme a3 and Cu(B). The protein is Probable cytochrome c oxidase subunit 2 (ctaC) of Nocardia farcinica (strain IFM 10152).